The sequence spans 577 residues: Polyadenylate-binding protein, cytoplasmic and nuclear (577 aa).

The span at 1 to 10 shows a compositional bias: basic and acidic residues; that stretch reads MADITDKTAE. The tract at residues 1–36 is disordered; that stretch reads MADITDKTAEQLENLNIQDDQKQAATGSESQSVENS. The residue at position 2 (Ala2) is an N-acetylalanine. A Glycyl lysine isopeptide (Lys-Gly) (interchain with G-Cter in ubiquitin) cross-link involves residue Lys7. Residues 9-61 form a required and sufficient for nuclear export region; it reads AEQLENLNIQDDQKQAATGSESQSVENSSASLYVGDLEPSVSEAHLYDIFSPI. Residues 11 to 27 are compositionally biased toward polar residues; it reads QLENLNIQDDQKQAATG. Positions 12 to 17 match the Nuclear export signal motif; it reads LENLNI. 4 RRM domains span residues 38–116, 126–203, 219–296, and 322–399; these read ASLY…WSQR, GNIF…PHLS, TNLY…RAQK, and VNLF…IAQR. Arg107 bears the Omega-N-methylarginine mark. A Phosphoserine modification is found at Ser249. Residues 281 to 317 form a required and sufficient for nuclear import region; that stretch reads DSELNGEKLYVGRAQKKNERMHVLKKQYEAYRLEKMA. Ser332 bears the Phosphoserine mark. A Glycyl lysine isopeptide (Lys-Gly) (interchain with G-Cter in ubiquitin) cross-link involves residue Lys337. The residue at position 405 (Ser405) is a Phosphoserine. The interaction with SUP35 stretch occupies residues 473 to 577; it reads PPQFRNGPVY…KEQEQQTEQA (105 aa). In terms of domain architecture, PABC spans 489–568; that stretch reads GFPRNANDNN…ASAAYESFKK (80 aa).

It belongs to the polyadenylate-binding protein type-1 family. In terms of assembly, binds to poly(A) mRNA to form a periodic structure with a packing density of one molecule per 25 adenylate residues. Interacts with the nuclear export factor CRM1 and with the importin SXM1. Interacts with RNA15, a component of the cleavage factor IA (CFIA) complex. Interacts with translation initiation factor eIF4G (TIF4631 or TIF4632) and release factor eRF3 (SUP35). Interacts with the PAB-dependent poly(A)-nuclease (PAN) complex regulatory subunit PAN3. Interacts with ARF1, DCP1, PBP1, the Hsp70 chaperone SSA1, and TPA1. Interacts with PAT1 in an RNA-dependent manner.

It localises to the cytoplasm. The protein localises to the nucleus. Binds the poly(A) tail of mRNA. Appears to be an important mediator of the multiple roles of the poly(A) tail in mRNA biogenesis, stability and translation. In the nucleus, interacts with the nuclear cleavage factor IA (CFIA), which is required for both mRNA cleavage and polyadenylation. Is also required for efficient mRNA export to the cytoplasm. Acts in concert with a poly(A)-specific nuclease (PAN) to affect poly(A) tail shortening, which may occur concomitantly with either nucleocytoplasmic mRNA transport or translational initiation. Regulates PAN activity via interaction with the stimulator PAN3 or the inhibitor PBP1. In the cytoplasm, affects both translation and mRNA decay. Stimulates translation by interaction with translation initiation factor eIF4G, a subunit of the cap-binding complex eIF4F, bringing the 5'- and 3'-ends of the mRNA in proximity. The formation of this circular mRNP structure appears to be critical for the synergistic effects of the cap and the poly(A) tail in facilitating translation initiation, recycling of ribosomes, and mRNA stability. Also regulates translation termination by recruiting eukaryotic release factor 3 (eRF3). Interaction with eRF3 is also required for regulation of normal mRNA decay through translation termination-coupled poly(A) shortening, probably mediated by PAN. Loss of PAB1 from the mRNP after deadenylation triggers mRNA degradation. Inhibits the major cytoplasmic mRNA deadenylase CCR4-NOT complex. Is also associated peripherally with COPI vesicles through its interaction with ARF1, and this is required for correct localization of the asymmetrically distributed ASH1 mRNA. In Saccharomyces cerevisiae (strain ATCC 204508 / S288c) (Baker's yeast), this protein is Polyadenylate-binding protein, cytoplasmic and nuclear (PAB1).